The chain runs to 283 residues: Agmatinase (283 aa).

The a divalent metal cation site is built by His112, Asp131, His133, Asp135, Asp211, and Asp213.

This sequence belongs to the arginase family. Agmatinase subfamily. In terms of assembly, homotetramer. The cofactor is a divalent metal cation.

The catalysed reaction is agmatine + H2O = urea + putrescine. It participates in amine and polyamine biosynthesis; putrescine biosynthesis via agmatine pathway; putrescine from agmatine: step 1/1. Its activity is regulated as follows. Inhibited by putrescine. Activity is not affected by arginine and ornithine. In terms of biological role, catalyzes the formation of putrescine from agmatine. Cannot use arginine. The protein is Agmatinase of Pyrococcus horikoshii (strain ATCC 700860 / DSM 12428 / JCM 9974 / NBRC 100139 / OT-3).